Reading from the N-terminus, the 450-residue chain is Phosphoglucosamine mutase (450 aa).

Ser103 functions as the Phosphoserine intermediate in the catalytic mechanism. Mg(2+) contacts are provided by Ser103, Asp243, Asp245, and Asp247. Ser103 bears the Phosphoserine mark.

It belongs to the phosphohexose mutase family. It depends on Mg(2+) as a cofactor. Post-translationally, activated by phosphorylation.

It catalyses the reaction alpha-D-glucosamine 1-phosphate = D-glucosamine 6-phosphate. Its function is as follows. Catalyzes the conversion of glucosamine-6-phosphate to glucosamine-1-phosphate. This chain is Phosphoglucosamine mutase, found in Lactobacillus helveticus (strain DPC 4571).